A 671-amino-acid chain; its full sequence is Kinesin-like protein KIF2C (671 aa).

Residues 1 to 200 (MIDIDDVAAI…CNPLTVTDPI (200 aa)) are globular. The interval 37-58 (QKRKSVNSKIPGPKEGLRSRST) is disordered. Position 41 is a phosphoserine; by AURKB (S41). A Microtubule tip localization signal motif is present at residues 44–47 (SKIP). Phosphoserine is present on residues S55, S57, S61, S112, S121, S133, and S138. The tract at residues 115–138 (AEEQAHSTRSTSSANPGNSVRRKS) is disordered. A compositionally biased stretch (polar residues) spans 121–132 (STRSTSSANPGN). The negative regulator of microtubule-binding stretch occupies residues 153-184 (EKRAQNSEIRIKRAQEYDNSFPNWEFARMIKE). Positions 204–534 (RICVCVRKRP…LRYADRVKEL (331 aa)) constitute a Kinesin motor domain. ATP is bound by residues R210 and 294–301 (GQTGSGKT). The residue at position 465 (S465) is a Phosphoserine. Positions 533–568 (ELSPHSGPSGEQAVQMETEEMDASSHGASLTGNEEE) are disordered. A coiled-coil region spans residues 566–601 (EEEELSSQMSSFNEAMTQIRELEERAMEELREIIQQ). Position 576 is a phosphoserine (S576).

The protein belongs to the TRAFAC class myosin-kinesin ATPase superfamily. Kinesin family. MCAK/KIF2 subfamily. In terms of assembly, interacts with CENPH. Interacts with MTUS2/TIP150; the interaction is direct. Interacts with MAPRE1; the interaction is direct, regulated by phosphorylation and is probably required for targeting to growing microtubule plus ends. Interacts with KIF18B at microtubule tips; this interaction increases the affinity of both partners for microtubule plus ends and is required for robust microtubule depolymerization. Phosphorylation by AURKA or AURKB strongly reduces KIF18B-binding. Post-translationally, phosphorylation by AURKB, regulates association with centromeres and kinetochores and the microtubule depolymerization activity. In terms of processing, ubiquitinated. In terms of tissue distribution, testis. Localized to the meiotically active cells of the seminiferous epithelia in the testis.

It is found in the cytoplasm. The protein localises to the cytoskeleton. The protein resides in the nucleus. It localises to the chromosome. Its subcellular location is the centromere. It is found in the kinetochore. In complex with KIF18B, constitutes the major microtubule plus-end depolymerizing activity in mitotic cells. Regulates the turnover of microtubules at the kinetochore and functions in chromosome segregation during mitosis. Plays a role in chromosome congression and is required for the lateral to end-on conversion of the chromosome-microtubule attachment. The protein is Kinesin-like protein KIF2C (Kif2c) of Rattus norvegicus (Rat).